The primary structure comprises 309 residues: Serine/threonine-protein phosphatase 2A catalytic subunit beta isoform (309 aa).

Mn(2+)-binding residues include aspartate 57, histidine 59, aspartate 85, and asparagine 117. The Proton donor role is filled by histidine 118. Residues histidine 167 and histidine 241 each coordinate Mn(2+). Tyrosine 307 is modified (phosphotyrosine). Leucine 309 is subject to Leucine methyl ester.

This sequence belongs to the PPP phosphatase family. PP-1 subfamily. In terms of assembly, PP2A consists of a common heterodimeric core enzyme (composed of a 36 kDa catalytic subunit (subunit C) and a 65 kDa constant regulatory subunit (PR65) (subunit A)) that associates with a variety of regulatory subunits. Proteins that associate with the core dimer include three families of regulatory subunits B (the R2/B/PR55/B55, R3/B''/PR72/PR130/PR59 and R5/B'/B56 families), the 48 kDa variable regulatory subunit, viral proteins, and cell signaling molecules. Binds PPME1. May indirectly interact with SGO1, most probably through regulatory B56 subunits. Found in a complex with at least ARL2, PPP2CB, PPP2R1A, PPP2R2A, PPP2R5E and TBCD. Interacts with TBCD. Interacts with CTTNBP2NL. Interacts with PTPA. Part of the core of STRIPAK complexes composed of PP2A catalytic and scaffolding subunits, the striatins (PP2A regulatory subunits), the striatin-associated proteins MOB4, STRIP1 and STRIP2, PDCD10 and members of the STE20 kinases, such as STK24 and STK26. It depends on Mn(2+) as a cofactor. In terms of processing, reversibly methyl esterified on Leu-309 by leucine carboxyl methyltransferase 1 (LCMT1) and protein phosphatase methylesterase 1 (PPME1). Carboxyl methylation influences the affinity of the catalytic subunit for the different regulatory subunits, thereby modulating the PP2A holoenzyme's substrate specificity, enzyme activity and cellular localization. Phosphorylation of either threonine (by autophosphorylation-activated protein kinase) or tyrosine results in inactivation of the phosphatase. Auto-dephosphorylation has been suggested as a mechanism for reactivation. Post-translationally, may be monoubiquitinated by NOSIP.

Its subcellular location is the cytoplasm. The protein resides in the nucleus. The protein localises to the chromosome. It is found in the centromere. It localises to the cytoskeleton. Its subcellular location is the spindle pole. The enzyme catalyses O-phospho-L-seryl-[protein] + H2O = L-seryl-[protein] + phosphate. It catalyses the reaction O-phospho-L-threonyl-[protein] + H2O = L-threonyl-[protein] + phosphate. Catalytic subunit of protein phosphatase 2A (PP2A), a serine/threonine phosphatase involved in the regulation of a wide variety of enzymes, signal transduction pathways, and cellular events. PP2A can modulate the activity of phosphorylase B kinase, casein kinase 2, mitogen-stimulated S6 kinase, and MAP-2 kinase. Part of the striatin-interacting phosphatase and kinase (STRIPAK) complexes. STRIPAK complexes have critical roles in protein (de)phosphorylation and are regulators of multiple signaling pathways including Hippo, MAPK, nuclear receptor and cytoskeleton remodeling. Different types of STRIPAK complexes are involved in a variety of biological processes such as cell growth, differentiation, apoptosis, metabolism and immune regulation. In Bos taurus (Bovine), this protein is Serine/threonine-protein phosphatase 2A catalytic subunit beta isoform (PPP2CB).